A 176-amino-acid chain; its full sequence is Protein MAL2 (176 aa).

Over 1-34 (MSAGGAPVPPPPNPAMSFPAPRVTLPAGPDILRT) the chain is Cytoplasmic. The MARVEL domain occupies 31–175 (ILRTYSGAFV…SLGLALRRWR (145 aa)). Residues 35-55 (YSGAFVCLEIVFGGLVWILVA) form a helical membrane-spanning segment. Residues 56–66 (SSNVPLPLLQG) lie on the Lumenal side of the membrane. A helical transmembrane segment spans residues 67-87 (WVMFVSVTAFVCSLLFLGVFL). At 88 to 102 (SGVVTQINANWNFLD) the chain is on the cytoplasmic side. A helical transmembrane segment spans residues 103–123 (FAYHFTVFVFYFGAFLLEAAT). Residues 124 to 149 (TSLHDLRCNRTMTVQPLLSDNQYNIN) lie on the Lumenal side of the membrane. N132 is a glycosylation site (N-linked (GlcNAc...) asparagine). A helical transmembrane segment spans residues 150 to 170 (VAATIFAFVTTACYGCSLGLA). The Cytoplasmic portion of the chain corresponds to 171–176 (LRRWRP).

The protein belongs to the MAL family. Interacts with TPD52L2.

The protein resides in the cell membrane. The protein localises to the apical cell membrane. Member of the machinery of polarized transport. Required for the indirect transcytotic route at the step of the egress of the transcytosing cargo from perinuclear endosomes in order for it to travel to the apical surface via a raft-dependent pathway. The polypeptide is Protein MAL2 (MAL2) (Bos taurus (Bovine)).